The sequence spans 369 residues: DNA replication and repair protein RecF (369 aa).

Residue 30-37 (GRNAQGKT) coordinates ATP.

The protein belongs to the RecF family.

The protein localises to the cytoplasm. Its function is as follows. The RecF protein is involved in DNA metabolism; it is required for DNA replication and normal SOS inducibility. RecF binds preferentially to single-stranded, linear DNA. It also seems to bind ATP. This Streptococcus agalactiae serotype Ia (strain ATCC 27591 / A909 / CDC SS700) protein is DNA replication and repair protein RecF.